The sequence spans 236 residues: 2,3,4,5-tetrahydropyridine-2,6-dicarboxylate N-acetyltransferase (236 aa).

The protein belongs to the transferase hexapeptide repeat family. DapH subfamily.

It carries out the reaction (S)-2,3,4,5-tetrahydrodipicolinate + acetyl-CoA + H2O = L-2-acetamido-6-oxoheptanedioate + CoA. It participates in amino-acid biosynthesis; L-lysine biosynthesis via DAP pathway; LL-2,6-diaminopimelate from (S)-tetrahydrodipicolinate (acetylase route): step 1/3. In terms of biological role, catalyzes the transfer of an acetyl group from acetyl-CoA to tetrahydrodipicolinate. In Clostridium perfringens (strain SM101 / Type A), this protein is 2,3,4,5-tetrahydropyridine-2,6-dicarboxylate N-acetyltransferase.